The sequence spans 2226 residues: Histone-lysine N-methyltransferase ash1 (2226 aa).

A disordered region spans residues 1–145 (MSCSQNETAA…SDSEDDLPLK (145 aa)). Residues 32 to 52 (ITDQSSQSKSIKSATQFSVQR) show a composition bias toward polar residues. A compositionally biased stretch (basic residues) spans 99–111 (AVSKKVKVKRKKL). 3 positions are modified to phosphoserine: Ser135, Ser136, and Ser138. Thr200 and Thr201 each carry phosphothreonine. The span at 260 to 269 (PRKRRGRPKK) shows a compositional bias: basic residues. Disordered stretches follow at residues 260 to 324 (PRKR…IASS), 343 to 367 (RVLYPPPRSKRRQNNKKTACSSSNK), 673 to 695 (AQQLTLNGGGPASTLSKPLKRGL), 711 to 749 (SASASGTPNGSGSSNGNTKRRHKKSQSNDSSSPDDHKLP), and 811 to 832 (KRHLLEQPTSVSGAGSSASNSP). A DNA-binding region (a.T hook 1) is located at residues 261-273 (RKRRGRPKKVVPT). Residues 294–306 (STTSTTQSTTPSP) show a composition bias toward low complexity. Residues 307 to 324 (KMQNENAVPTGSLPIASS) show a composition bias toward polar residues. The span at 711 to 727 (SASASGTPNGSGSSNGN) shows a compositional bias: low complexity. Phosphoserine is present on residues Ser740, Ser831, and Ser977. Over residues 820–831 (SVSGAGSSASNS) the composition is skewed to low complexity. 2 disordered regions span residues 980 to 1026 (QQTT…DCER) and 1049 to 1230 (SVVA…TTSL). The span at 989 to 999 (HEPEFDPDDEP) shows a compositional bias: acidic residues. DNA-binding regions (a.T hook) lie at residues 1065 to 1077 (GRPRGRKPKNREQ) and 1095 to 1107 (AKKRGRQPKQPVL). Residues 1108–1117 (EEPPPTPPPQ) are compositionally biased toward pro residues. Residues 1186 to 1200 (AEAKRLDSIPTEHDP) are compositionally biased toward basic and acidic residues. Polar residues predominate over residues 1205 to 1219 (ESHNPGPQDYASCSE). An AWS domain is found at 1339–1387 (FDHPTCNCKNQGEKSCLDNCLNRMVYTECSPSNCPAGEKCRNQKIQRHA). The SET domain occupies 1390–1506 (PGVERFMTAD…EGEELTYDYN (117 aa)). One can recognise a Post-SET domain in the interval 1514–1530 (EGQPCRCNTPQCRGVIG). 2 disordered regions span residues 1536–1575 (VKPLPAVEAKPSGEGLSGRNGRQRKQKAKKHAQRQAGKDI) and 1616–1648 (RASDAAATASSPALGTTNGDIPGRRPSTPSSPS). Basic residues predominate over residues 1556–1568 (GRQRKQKAKKHAQ). Low complexity-rich tracts occupy residues 1619 to 1628 (DAAATASSPA) and 1639 to 1648 (RRPSTPSSPS). A Bromo domain is found at 1681–1789 (KMAVVLRDIC…DSYEQQKIAS (109 aa)). The tract at residues 1808-1839 (PKEVLSSEEEPGKIAVKKSPGAKERDSPIVPL) is disordered. A PHD-type zinc finger spans residues 1857-1903 (VIRCICGLYKDEGLMIQCSKCMVWQHTECTKADIDADNYQCERCEPR). The region spanning 1952 to 2072 (KVLPTKKHTY…KTARFFSKAK (121 aa)) is the BAH domain. The interval 2205–2226 (SGRGARQRKTQQSSSSSTANST) is disordered. Residues 2214–2226 (TQQSSSSSTANST) show a composition bias toward low complexity.

This sequence belongs to the class V-like SAM-binding methyltransferase superfamily. Histone-lysine methyltransferase family. SET2 subfamily. As to quaternary structure, component of a large multiprotein complex distinct from complexes containing ash2 or brm. Interacts (via SET domain) with trx (via SET domain). Interacts with nej/cbp. In terms of tissue distribution, expressed throughout development but is present at higher levels during the embryonic and pupal stages than during the larval stages. During the larval stages it accumulates primarily in imaginal disks.

It localises to the nucleus. The protein resides in the chromosome. It catalyses the reaction L-lysyl(4)-[histone H3] + 3 S-adenosyl-L-methionine = N(6),N(6),N(6)-trimethyl-L-lysyl(4)-[histone H3] + 3 S-adenosyl-L-homocysteine + 3 H(+). Its function is as follows. Trithorax group (TrxG) protein that has histone methyltransferase activity. Specifically trimethylates 'Lys-4' of histone H3 (H3K4me3), a specific tag for epigenetic transcriptional activation. TrxG proteins are generally required to maintain the transcriptionally active state of homeotic genes throughout development. Does not act as a coactivator required for transcriptional activation, but specifically prevents inappropriate Polycomb Group (PcG) silencing of homeotic genes in cells in which they must stay transcriptionally active. The chain is Histone-lysine N-methyltransferase ash1 (ash1) from Drosophila melanogaster (Fruit fly).